The following is a 539-amino-acid chain: Inosine-5'-monophosphate dehydrogenase (539 aa).

2 consecutive CBS domains span residues 140–196 (IIVN…DMPI) and 200–257 (MTRE…PRAC). NAD(+)-binding positions include aspartate 292 and 343-345 (GIG). Positions 345 and 347 each coordinate K(+). Serine 348 provides a ligand contact to IMP. A K(+)-binding site is contributed by cysteine 350. The Thioimidate intermediate role is filled by cysteine 350. IMP contacts are provided by residues 383-385 (DGG), 406-407 (GS), and 430-434 (YRGMG). Arginine 446 (proton acceptor) is an active-site residue. Glutamate 460 contacts IMP. Residues glutamate 514 and histidine 516 each contribute to the K(+) site. The interval 517–539 (PHDIAITQEAPNYSPDVHSGDAG) is disordered.

This sequence belongs to the IMPDH/GMPR family. As to quaternary structure, homotetramer. The cofactor is K(+).

The enzyme catalyses IMP + NAD(+) + H2O = XMP + NADH + H(+). Its pathway is purine metabolism; XMP biosynthesis via de novo pathway; XMP from IMP: step 1/1. With respect to regulation, mycophenolic acid (MPA) is a non-competitive inhibitor that prevents formation of the closed enzyme conformation by binding to the same site as the amobile flap. In contrast, mizoribine monophosphate (MZP) is a competitive inhibitor that induces the closed conformation. MPA is a potent inhibitor of mammalian IMPDHs but a poor inhibitor of the bacterial enzymes. MZP is a more potent inhibitor of bacterial IMPDH. Functionally, catalyzes the conversion of inosine 5'-phosphate (IMP) to xanthosine 5'-phosphate (XMP), the first committed and rate-limiting step in the de novo synthesis of guanine nucleotides, and therefore plays an important role in the regulation of cell growth. This is Inosine-5'-monophosphate dehydrogenase from Rhodopirellula baltica (strain DSM 10527 / NCIMB 13988 / SH1).